Here is a 239-residue protein sequence, read N- to C-terminus: Terpene cyclase idtB (239 aa).

The next 5 membrane-spanning stretches (helical) occupy residues 20–40 (MADT…ALMI), 50–70 (CMAL…TIVY), 75–95 (RVEL…MVGA), 113–133 (AGFI…ALAM), and 138–158 (GLAY…GGLF). Asn-164 is a glycosylation site (N-linked (GlcNAc...) asparagine). The helical transmembrane segment at 197–217 (EVFGWLASPLVLWSLVTFLLA) threads the bilayer.

The protein belongs to the paxB family.

It is found in the membrane. Its pathway is secondary metabolite biosynthesis. Functionally, terpene cyclase; part of the gene cluster that mediates the biosynthesis of paspalitrems, indole-diterpene (IDT) mycotoxins that are potent tremorgens in mammals. The geranylgeranyl diphosphate (GGPP) synthase idtG is proposed to catalyze the first step in IDT biosynthesis via catalysis of a series of iterative condensations of isopentenyl diphosphate (IPP) with dimethylallyl diphosphate (DMAPP), geranyl diphosphate (GPP), and farnesyl diphosphate (FPP), to form GGPP. Condensation of indole-3-glycerol phosphate with GGPP by the prenyltransferase idtC then forms 3-geranylgeranylindole (3-GGI). Epoxidation of the two terminal alkenes of the geranylgeranyl moiety by the FAD-dependent monooxygenase idtM, and cyclization by the terpene cyclase idtB then leads to the production of paspaline. The cytochrome P450 monooxygenase idtP then catalyzes oxidative elimination of the pendant methyl group at C-12 of paspaline and generates the C-10 ketone to yield 13-desoxypaxilline. The cytochrome P450 monooxygenase idtQ may catalyze the C-13 oxidation of 13-desoxypaxilline to afford paxilline. Considering that both paspalicine and paxilline were detected in C.paspali, idtQ also catalyzes the formation of paspalinine from 13-desoxypaxilline via paspalicine as an intermediate. Finally, the alpha-prenyltransferase idtF prenylates paspalinine at the C-20 or the C-21 positions to yield paspalitrems A and C, respectively. The hydroxylation of paspalitrem A at C-32 by a still unknown oxidase affords paspalitrem B. The protein is Terpene cyclase idtB of Claviceps paspali (Rye ergot fungus).